Consider the following 1088-residue polypeptide: V-type proton ATPase catalytic subunit A (1088 aa).

257–264 (GAFGCGKT) is an ATP binding site. One can recognise a DOD-type homing endonuclease domain in the interval 485-662 (LLGTWAGIGN…LVKIAHSLGI (178 aa)).

Belongs to the ATPase alpha/beta chains family. In terms of assembly, V-ATPase is a heteromultimeric enzyme composed of a peripheral catalytic V1 complex (components A to H) attached to an integral membrane V0 proton pore complex (components: a, c, c', c'', d, e, f and VOA1). This protein undergoes a protein self splicing that involves a post-translational excision of the VDE intervening region (intein) followed by peptide ligation.

The protein localises to the vacuole membrane. The enzyme catalyses ATP + H2O + 4 H(+)(in) = ADP + phosphate + 5 H(+)(out). Catalytic subunit of the V1 complex of vacuolar(H+)-ATPase (V-ATPase), a multisubunit enzyme composed of a peripheral complex (V1) that hydrolyzes ATP and a membrane integral complex (V0) that translocates protons. V-ATPase is responsible for acidifying and maintaining the pH of intracellular compartments. In terms of biological role, VDE is an endonuclease that can cleave at a site present in a VMA1 allele that lacks the derived endonuclease segment of the open reading frame; cleavage at this site only occurs during meiosis and initiates 'homing', a genetic event that converts a VMA1 allele lacking VDE into one that contains it. This is V-type proton ATPase catalytic subunit A (VMA1) from Candida tropicalis (Yeast).